Reading from the N-terminus, the 237-residue chain is Flagellar brake protein YcgR (237 aa).

Positions 108–225 constitute a PilZ domain; the sequence is QRRRQFRVTT…MERKIQSAVF (118 aa).

It belongs to the YcgR family. As to quaternary structure, monomer. Interacts with the flagellar basal bodies.

The protein localises to the bacterial flagellum basal body. Acts as a flagellar brake, regulating swimming and swarming in a bis-(3'-5') cyclic diguanylic acid (c-di-GMP)-dependent manner. Binds 1 c-di-GMP dimer per subunit. Increasing levels of c-di-GMP lead to decreased motility. The polypeptide is Flagellar brake protein YcgR (Serratia proteamaculans (strain 568)).